Consider the following 509-residue polypeptide: Histidine ammonia-lyase (509 aa).

Residues 142–144 (ASG) constitute a cross-link (5-imidazolinone (Ala-Gly)). 2,3-didehydroalanine (Ser) is present on Ser-143.

The protein belongs to the PAL/histidase family. In terms of processing, contains an active site 4-methylidene-imidazol-5-one (MIO), which is formed autocatalytically by cyclization and dehydration of residues Ala-Ser-Gly.

Its subcellular location is the cytoplasm. It carries out the reaction L-histidine = trans-urocanate + NH4(+). It functions in the pathway amino-acid degradation; L-histidine degradation into L-glutamate; N-formimidoyl-L-glutamate from L-histidine: step 1/3. The protein is Histidine ammonia-lyase of Sphingopyxis alaskensis (strain DSM 13593 / LMG 18877 / RB2256) (Sphingomonas alaskensis).